Reading from the N-terminus, the 690-residue chain is Calpain-9 (690 aa).

The disordered stretch occupies residues 1 to 23 (MPYLHRSLRPQPQPVPGDARTIH). The Calpain catalytic domain maps to 42 to 337 (LFEDADFPAS…FDKVEICNLT (296 aa)). Residues leucine 81, glycine 83, and aspartate 88 each coordinate Ca(2+). Residue cysteine 97 is part of the active site. Glutamate 167 is a binding site for Ca(2+). Active-site residues include histidine 254 and asparagine 278. Ca(2+) is bound by residues glutamate 284, aspartate 291, leucine 312, aspartate 314, and glutamate 316. Residues 338 to 521 (PDALEDSALH…PQEEETEEEQ (184 aa)) are domain III. EF-hand domains follow at residues 518 to 552 (EEEQ…VLQK), 561 to 589 (LSLL…FRVF), and 591 to 626 (DKLK…AGFQ). A domain IV region spans residues 522 to 690 (QFRALFQRVA…NEFISLTMNI (169 aa)). Aspartate 574, serine 576, asparagine 578, lysine 580, glutamate 585, aspartate 604, aspartate 606, serine 608, threonine 610, and glutamate 615 together coordinate Ca(2+).

The protein belongs to the peptidase C2 family. In terms of tissue distribution, predominantly expressed in stomach and small intestine, although low levels of expression in other organs.

The protein resides in the cytoplasm. Calcium-regulated non-lysosomal thiol-protease. This chain is Calpain-9 (Capn9), found in Mus musculus (Mouse).